The chain runs to 249 residues: MEMGRRIHLELRNRTPSDVKELVLDNCRSIEGKIEGLTDEFEELEFLSTINVGLTSVANLPKLNKLKKLELSDNRISGGLEVLAEKCPNLTHLNLSGNKIKDLSTIEPLKKLENLKSLDLFNCEVTNLNDYRENVFKLLPQLTYLDGYDRDDKEAPDSDAEGYVEGLDDDEEDEDEEEYDEDAQVVEDEEDEEEEEEGEEEDVSGEEEEDEEGYNDGEVDDEEDEEDVGEEERGQKRKREPXDXGEDDD.

The residue at position 15 (threonine 15) is a Phosphothreonine. Serine 17 carries the phosphoserine modification. LRR repeat units follow at residues 18–41 (DVKELVLDNCRSIEGKIEGLTDEF), 43–64 (ELEFLSTINVGLTSVANLPKLN), 65–87 (KLKKLELSDNRISGGLEVLAEKC), and 89–110 (NLTHLNLSGNKIKDLSTIEPLK). The LRRCT domain occupies 123 to 161 (CEVTNLNDYRENVFKLLPQLTYLDGYDRDDKEAPDSDAE). A compositionally biased stretch (basic and acidic residues) spans 147–156 (GYDRDDKEAP). Positions 147-249 (GYDRDDKEAP…EPXDXGEDDD (103 aa)) are disordered. The tract at residues 150-174 (RDDKEAPDSDAEGYVEGLDDDEEDE) is necessary for tumor-suppressive function. Over residues 157 to 230 (DSDAEGYVEG…DEEDEEDVGE (74 aa)) the composition is skewed to acidic residues. Phosphoserine is present on residues serine 158 and serine 204. The interval 165–249 (EGLDDDEEDE…EPXDXGEDDD (85 aa)) is interaction with E4F1.

This sequence belongs to the ANP32 family. As to quaternary structure, component of the SET complex, composed of at least ANP32A, APEX1, HMGB2, NME1, SET and TREX1. Directly interacts with SET. Interacts with ATXN1/SCA1. Interacts with MAP1B. Interacts with ELAVL1. Part of the INHAT (inhibitor of histone acetyltransferases) complex. Interacts with E4F1. In terms of processing, phosphorylated on serine residues, at least in part by casein kinase 2/CK2. Post-translationally, some glutamate residues are glycylated by TTLL8. This modification occurs exclusively on glutamate residues and results in a glycine chain on the gamma-carboxyl group.

Its subcellular location is the nucleus. It is found in the cytoplasm. The protein localises to the endoplasmic reticulum. Multifunctional protein that is involved in the regulation of many processes including tumor suppression, apoptosis, cell cycle progression or transcription. Promotes apoptosis by favouring the activation of caspase-9/CASP9 and allowing apoptosome formation. In addition, plays a role in the modulation of histone acetylation and transcription as part of the INHAT (inhibitor of histone acetyltransferases) complex. Inhibits the histone-acetyltranferase activity of EP300/CREBBP (CREB-binding protein) and EP300/CREBBP-associated factor by histone masking. Preferentially binds to unmodified histone H3 and sterically inhibiting its acetylation and phosphorylation leading to cell growth inhibition. Participates in other biochemical processes such as regulation of mRNA nuclear-to-cytoplasmic translocation and stability by its association with ELAVL1 (Hu-antigen R). Plays a role in E4F1-mediated transcriptional repression as well as inhibition of protein phosphatase 2A. The protein is Acidic leucine-rich nuclear phosphoprotein 32 family member A (ANP32A) of Canis lupus familiaris (Dog).